We begin with the raw amino-acid sequence, 549 residues long: Protein X92 (549 aa).

In Trypanosoma brucei brucei, this protein is Protein X92.